Reading from the N-terminus, the 236-residue chain is Ribosome assembly factor MRT4 (236 aa).

This sequence belongs to the universal ribosomal protein uL10 family. In terms of assembly, associates with the pre-60S ribosomal particle.

The protein resides in the nucleus. The protein localises to the nucleolus. It localises to the cytoplasm. Its function is as follows. Component of the ribosome assembly machinery. Nuclear paralog of the ribosomal protein P0, it binds pre-60S subunits at an early stage of assembly in the nucleolus, and is replaced by P0 in cytoplasmic pre-60S subunits and mature 80S ribosomes. The polypeptide is Ribosome assembly factor MRT4 (Saccharomyces cerevisiae (strain ATCC 204508 / S288c) (Baker's yeast)).